A 1438-amino-acid chain; its full sequence is DNA polymerase III PolC-type (1438 aa).

The region spanning 422–578 (YVVFDVETTG…YDTEATAYMF (157 aa)) is the Exonuclease domain.

This sequence belongs to the DNA polymerase type-C family. PolC subfamily.

Its subcellular location is the cytoplasm. It catalyses the reaction DNA(n) + a 2'-deoxyribonucleoside 5'-triphosphate = DNA(n+1) + diphosphate. Its function is as follows. Required for replicative DNA synthesis. This DNA polymerase also exhibits 3' to 5' exonuclease activity. This chain is DNA polymerase III PolC-type, found in Staphylococcus saprophyticus subsp. saprophyticus (strain ATCC 15305 / DSM 20229 / NCIMB 8711 / NCTC 7292 / S-41).